Reading from the N-terminus, the 514-residue chain is Cytochrome P450 monooxygenase ptmQ (514 aa).

A helical membrane pass occupies residues 3-23; that stretch reads YVAQSPWIATLIVTATTYCTL. An N-linked (GlcNAc...) asparagine glycan is attached at N148. C452 contributes to the heme binding site. N486 carries N-linked (GlcNAc...) asparagine glycosylation.

Belongs to the cytochrome P450 family. The cofactor is heme.

The protein localises to the membrane. The protein operates within secondary metabolite biosynthesis. Functionally, cytochrome P450 monooxygenase; part of the gene cluster that mediates the biosynthesis of the indole diterpenes penitrems. The geranylgeranyl diphosphate (GGPP) synthase ptmG catalyzes the first step in penitrem biosynthesis via conversion of farnesyl pyrophosphate and isopentyl pyrophosphate into geranylgeranyl pyrophosphate (GGPP). Condensation of indole-3-glycerol phosphate with GGPP by the prenyl transferase ptmC then forms 3-geranylgeranylindole (3-GGI). Epoxidation by the FAD-dependent monooxygenase ptmM leads to a epoxidized-GGI that is substrate of the terpene cyclase ptmB for cyclization to yield paspaline. Paspaline is subsequently converted to 13-desoxypaxilline by the cytochrome P450 monooxygenase ptmP, the latter being then converted to paxilline by the cytochrome P450 monooxygenase ptmQ. Paxilline is converted to beta-paxitriol via C-10 ketoreduction by the short-chain dehydrogenase ptmH which can be monoprenylated at the C-20 by the indole diterpene prenyltransferase ptmD. A two-step elimination (acetylation and elimination) process performed by the O-acetyltransferase ptmV and ptmI leads to the production of the prenylated form of penijanthine. The FAD-linked oxidoreductase ptmO then converts the prenylated form of penijanthine into PC-M5 which is in turn transformed into PC-M4 by the aromatic dimethylallyltransferase ptmE. Five sequential oxidative transformations performed by the cytochrome P450 monooxygenases ptmK, ptmU, ptmL, ptmN and ptmJ yield the various penitrem compounds. PtmK, ptmU and ptmM are involved in the formation of the key bicyclic ring of penitrem C via the formation of the intermediates secopenitrem D and penitrem D. PtmL catalyzes the epoxidation of penitrem D and C to yield penitrem B and F, respectively. PtmJ catalyzes the last benzylic hydroxylation to convert penitrem B to prenitrem E and penitrem F to penitrem A. This is Cytochrome P450 monooxygenase ptmQ from Penicillium ochrochloron.